The following is a 552-amino-acid chain: Putative transport protein PBPRA2144 (552 aa).

5 consecutive transmembrane segments (helical) span residues 4–24, 26–46, 65–85, 95–115, and 158–178; these read IALS…IGNW, ICGV…VGHF, FGLI…FFAS, AFAA…YKIF, and MGYA…MWIL. 2 RCK C-terminal domains span residues 188 to 276 and 279 to 361; these read KEAE…VIGE and DASL…IVGN. A run of 6 helical transmembrane segments spans residues 371–391, 394–414, 439–459, 464–484, 493–513, and 532–552; these read MLPV…PFYL, FPAA…LILA, IVLF…DTLV, LSWM…VGFL, YLTI…LAFA, and PLVM…LWAV.

This sequence belongs to the AAE transporter (TC 2.A.81) family. YidE subfamily.

The protein resides in the cell membrane. The protein is Putative transport protein PBPRA2144 of Photobacterium profundum (strain SS9).